Reading from the N-terminus, the 313-residue chain is tRNA dimethylallyltransferase (313 aa).

11 to 18 (GPTAGGKT) contacts ATP. 13 to 18 (TAGGKT) provides a ligand contact to substrate. Interaction with substrate tRNA regions lie at residues 36–39 (DSAL), 160–164 (QRIGR), and 243–248 (RCVGYR).

Belongs to the IPP transferase family. As to quaternary structure, monomer. Mg(2+) is required as a cofactor.

It carries out the reaction adenosine(37) in tRNA + dimethylallyl diphosphate = N(6)-dimethylallyladenosine(37) in tRNA + diphosphate. Its function is as follows. Catalyzes the transfer of a dimethylallyl group onto the adenine at position 37 in tRNAs that read codons beginning with uridine, leading to the formation of N6-(dimethylallyl)adenosine (i(6)A). In Neisseria meningitidis serogroup B (strain ATCC BAA-335 / MC58), this protein is tRNA dimethylallyltransferase.